The following is a 211-amino-acid chain: FMN-dependent NADH:quinone oxidoreductase (211 aa).

Residues Ser-10 and 16–18 (SVS) contribute to the FMN site.

The protein belongs to the azoreductase type 1 family. In terms of assembly, homodimer. Requires FMN as cofactor.

The enzyme catalyses 2 a quinone + NADH + H(+) = 2 a 1,4-benzosemiquinone + NAD(+). It carries out the reaction N,N-dimethyl-1,4-phenylenediamine + anthranilate + 2 NAD(+) = 2-(4-dimethylaminophenyl)diazenylbenzoate + 2 NADH + 2 H(+). Functionally, quinone reductase that provides resistance to thiol-specific stress caused by electrophilic quinones. In terms of biological role, also exhibits azoreductase activity. Catalyzes the reductive cleavage of the azo bond in aromatic azo compounds to the corresponding amines. In Parafrankia sp. (strain EAN1pec), this protein is FMN-dependent NADH:quinone oxidoreductase.